Reading from the N-terminus, the 406-residue chain is Homocysteine-responsive endoplasmic reticulum-resident ubiquitin-like domain member 2 protein (406 aa).

One can recognise a Ubiquitin-like domain in the interval 10-89 (VTLIIKAPNQ…HMVHLVCTSR (80 aa)). The segment at 86–154 (CTSRTPPSSP…TLPQAQTDQA (69 aa)) is disordered. 2 stretches are compositionally biased toward low complexity: residues 87 to 98 (TSRTPPSSPKSS) and 106 to 126 (ALASSSNSSSDHSGSTTPSSG). Over residues 127–154 (QETLSLAVGSSSEGLRQRTLPQAQTDQA) the composition is skewed to polar residues. Residues 302–322 (FIMVMGAMLLVYLHQAGWFPF) form a helical membrane-spanning segment.

The protein resides in the membrane. Its function is as follows. Could be involved in the unfolded protein response (UPR) pathway. This is Homocysteine-responsive endoplasmic reticulum-resident ubiquitin-like domain member 2 protein (HERPUD2) from Homo sapiens (Human).